The primary structure comprises 415 residues: Ribulose bisphosphate carboxylase/oxygenase activase (415 aa).

37-44 (GRKGEGKT) contacts ATP.

It belongs to the RuBisCO activase family.

Its function is as follows. Activation of RuBisCO (ribulose-1,5-bisohosphate carboxylase/oxygenase; EC 4.1.1.39) involves the ATP-dependent carboxylation of the epsilon-amino group of lysine leading to a carbamate structure. The polypeptide is Ribulose bisphosphate carboxylase/oxygenase activase (rca) (Anabaena sp. (strain CA / ATCC 33047)).